We begin with the raw amino-acid sequence, 103 residues long: MMGSKMASASRVVQVVKPHTPLIRFPDRRDNPKPNVSEALRSAGLPSHSSVISQHSKGSKSPDLLMYQGPPDTAEIIKTLPQKYRRKLVSQEEMEFIQRGGPE.

M1 is modified (N-acetylmethionine). K5 is modified (N6-succinyllysine). Residues 20-69 (TPLIRFPDRRDNPKPNVSEALRSAGLPSHSSVISQHSKGSKSPDLLMYQG) form a disordered region. The segment covering 47 to 56 (SHSSVISQHS) has biased composition (polar residues). S49, S61, and S90 each carry phosphoserine.

Belongs to the alpha-ketoglutarate dehydrogenase component 4 family. In terms of assembly, component of the 2-oxoglutarate dehydrogenase complex (OGDHC), composed of OGDH (2-oxoglutarate dehydrogenase; also called E1 subunit), DLST (dihydrolipoamide succinyltransferase; also called E2 subunit) and DLD (dihydrolipoamide dehydrogenase; also called E3 subunit), and the assembly factor KGD4. Within OGDHC complex, interacts (via N-terminus) with E3 subunit and (via C-terminus) with E2 subunit.

It is found in the mitochondrion. Molecular adapter that is necessary to form a stable 2-oxoglutarate dehydrogenase enzyme complex (OGDHC). Enables the specific recruitment of E3 subunit to E2 subunit in the 2-oxoglutarate dehydrogenase complex (OGDHC). This is Alpha-ketoglutarate dehydrogenase component 4 from Homo sapiens (Human).